Consider the following 1398-residue polypeptide: DNA-directed RNA polymerase subunit beta' (1398 aa).

Positions 71, 73, 86, and 89 each coordinate Zn(2+). Residues Asp462, Asp464, and Asp466 each coordinate Mg(2+). Zn(2+) is bound by residues Cys810, Cys884, Cys891, and Cys894.

Belongs to the RNA polymerase beta' chain family. As to quaternary structure, the RNAP catalytic core consists of 2 alpha, 1 beta, 1 beta' and 1 omega subunit. When a sigma factor is associated with the core the holoenzyme is formed, which can initiate transcription. Mg(2+) is required as a cofactor. Requires Zn(2+) as cofactor.

It carries out the reaction RNA(n) + a ribonucleoside 5'-triphosphate = RNA(n+1) + diphosphate. Functionally, DNA-dependent RNA polymerase catalyzes the transcription of DNA into RNA using the four ribonucleoside triphosphates as substrates. The protein is DNA-directed RNA polymerase subunit beta' of Mesorhizobium japonicum (strain LMG 29417 / CECT 9101 / MAFF 303099) (Mesorhizobium loti (strain MAFF 303099)).